Here is a 439-residue protein sequence, read N- to C-terminus: Ectonucleotide pyrophosphatase/phosphodiesterase family member 7 (439 aa).

The first 21 residues, 1-21 (MGHSAVLLCVALAILPACVTG), serve as a signal peptide directing secretion. Residues 22–414 (APVQRQHKLL…ILRPMLRSGS (393 aa)) are Extracellular-facing. Zn(2+) is bound by residues D36 and T72. The tract at residues 69 to 75 (VTMTSPC) is required for enzyme activity. Residue T72 is the Nucleophile of the active site. N93 is a binding site for substrate. Residues N97, N118, N143, and N165 are each glycosylated (N-linked (GlcNAc...) asparagine). Zn(2+) is bound by residues D196, H200, D243, and H244. An N-linked (GlcNAc...) asparagine glycan is attached at N264. Zn(2+) is bound at residue H350. Residues 415–435 (ASLLSSQHHLVALLVGILTCL) traverse the membrane as a helical segment. The Cytoplasmic segment spans residues 436–439 (AKVL).

Zn(2+) serves as cofactor. In terms of processing, N-glycosylated; required for activity and transport to the plasma membrane. In terms of tissue distribution, expressed in liver and small intestine.

The protein localises to the cell membrane. The enzyme catalyses a sphingomyelin + H2O = phosphocholine + an N-acylsphing-4-enine + H(+). It carries out the reaction a 1-O-alkyl-2-acetyl-sn-glycero-3-phosphocholine + H2O = a 1-O-alkyl-2-acetyl-sn-glycerol + phosphocholine + H(+). The catalysed reaction is 1-O-octadecyl-2-acetyl-sn-glycero-3-phosphocholine + H2O = 1-O-octadecyl-2-acetyl-sn-glycerol + phosphocholine + H(+). It catalyses the reaction 1-hexadecanoyl-sn-glycero-3-phosphocholine + H2O = 1-hexadecanoyl-sn-glycerol + phosphocholine + H(+). Its function is as follows. Choline-specific phosphodiesterase that hydrolyzes sphingomyelin releasing the ceramide and phosphocholine and therefore is involved in sphingomyelin digestion, ceramide formation, and fatty acid (FA) absorption in the gastrointestinal tract. Also has phospholipase C activity and can also cleave phosphocholine from palmitoyl lyso-phosphatidylcholine and platelet-activating factor (PAF) leading to its inactivation. Does not have nucleotide pyrophosphatase activity. May promote cholesterol absorption by affecting the levels of sphingomyelin derived from either diet or endogenous sources, in the intestinal lumen. The sequence is that of Ectonucleotide pyrophosphatase/phosphodiesterase family member 7 from Mus musculus (Mouse).